A 176-amino-acid chain; its full sequence is ATP synthase subunit b (176 aa).

A helical membrane pass occupies residues 24 to 43; the sequence is FAFRVVNFVIFAGIIWKAAG.

The protein belongs to the ATPase B chain family. In terms of assembly, F-type ATPases have 2 components, F(1) - the catalytic core - and F(0) - the membrane proton channel. F(1) has five subunits: alpha(3), beta(3), gamma(1), delta(1), epsilon(1). F(0) has three main subunits: a(1), b(2) and c(10-14). The alpha and beta chains form an alternating ring which encloses part of the gamma chain. F(1) is attached to F(0) by a central stalk formed by the gamma and epsilon chains, while a peripheral stalk is formed by the delta and b chains.

Its subcellular location is the cell inner membrane. Functionally, f(1)F(0) ATP synthase produces ATP from ADP in the presence of a proton or sodium gradient. F-type ATPases consist of two structural domains, F(1) containing the extramembraneous catalytic core and F(0) containing the membrane proton channel, linked together by a central stalk and a peripheral stalk. During catalysis, ATP synthesis in the catalytic domain of F(1) is coupled via a rotary mechanism of the central stalk subunits to proton translocation. Its function is as follows. Component of the F(0) channel, it forms part of the peripheral stalk, linking F(1) to F(0). The chain is ATP synthase subunit b from Nitratidesulfovibrio vulgaris (strain ATCC 29579 / DSM 644 / CCUG 34227 / NCIMB 8303 / VKM B-1760 / Hildenborough) (Desulfovibrio vulgaris).